A 655-amino-acid polypeptide reads, in one-letter code: Methyl-accepting chemotaxis protein McpC (655 aa).

Residues Met1–Lys8 lie on the Cytoplasmic side of the membrane. The chain crosses the membrane as a helical span at residues Ile9 to Tyr29. The Extracellular segment spans residues Leu30–Arg276. Residues Trp148–Asp225 enclose the Cache domain. The helical transmembrane segment at Ala277–Ala297 threads the bilayer. An HAMP domain is found at Lys298–Glu350. Residues Lys298–Leu655 lie on the Cytoplasmic side of the membrane. The 251-residue stretch at Val369 to Asn619 folds into the Methyl-accepting transducer domain.

Belongs to the methyl-accepting chemotaxis (MCP) protein family. Interacts with FloT. Post-translationally, some glutamine residues are deamidated to glutamate by CheD and subsequently methylated.

It is found in the cell membrane. The protein localises to the membrane raft. In terms of biological role, chemotactic-signal transducers respond to changes in the concentration of attractants and repellents in the environment, transduce a signal from the outside to the inside of the cell, and facilitate sensory adaptation through the variation of the level of methylation. All amino acids serve as attractants in B.subtilis, they appear to cause an increase in the turnover methyl groups, leading to methylation of an unidentified acceptor, while repellents have been shown to cause a decrease in methyl group turnover. The methyl groups are added by a methyltransferase and removed by a methylesterase. McpC is required for taxis to cysteine, proline, threonine, glycine, serine, lysine, valine and arginine and for aspartate, glutamine, histidine and glutamate. Primarily mediates response to positive stimulus of PTS carbohydrates. Greatly influences the duration or magnitude of the response to negative PTS carbohydrate stimulus. This Bacillus subtilis (strain 168) protein is Methyl-accepting chemotaxis protein McpC (mcpC).